We begin with the raw amino-acid sequence, 177 residues long: uncharacterized protein (177 aa).

This is an uncharacterized protein from Azotobacter chroococcum mcd 1.